We begin with the raw amino-acid sequence, 719 residues long: Probable disease resistance protein At4g14610 (719 aa).

Residues 25-73 (SLPENLAALQKAIEVLKTKHDDVKRRVDKEEFLGRRHRLSQVQVEIERL) are a coiled coil. Residues 114–418 (EENLVAQVEE…NELEKILGCP (305 aa)) form the NB-ARC domain. 156–163 (GMGGVGKT) contributes to the ATP binding site. 3 LRR repeats span residues 400–421 (AVRR…PTCP), 422–444 (QLTT…FFRF), and 447–469 (NLVV…ISEV).

This sequence belongs to the disease resistance NB-LRR family.

In terms of biological role, probable disease resistance protein. The polypeptide is Probable disease resistance protein At4g14610 (Arabidopsis thaliana (Mouse-ear cress)).